The primary structure comprises 195 residues: Large ribosomal subunit protein uL11m (195 aa).

It belongs to the universal ribosomal protein uL11 family. Component of the mitochondrial ribosome large subunit (39S) which comprises a 16S rRNA and about 50 distinct proteins.

It localises to the mitochondrion. This Caenorhabditis elegans protein is Large ribosomal subunit protein uL11m (mrpl-11).